Reading from the N-terminus, the 197-residue chain is Xanthine phosphoribosyltransferase (197 aa).

Leucine 20 and asparagine 27 together coordinate xanthine. Alanine 128–alanine 132 is a binding site for 5-phospho-alpha-D-ribose 1-diphosphate. Lysine 156 provides a ligand contact to xanthine.

It belongs to the purine/pyrimidine phosphoribosyltransferase family. Xpt subfamily. As to quaternary structure, homodimer.

The protein localises to the cytoplasm. The catalysed reaction is XMP + diphosphate = xanthine + 5-phospho-alpha-D-ribose 1-diphosphate. Its pathway is purine metabolism; XMP biosynthesis via salvage pathway; XMP from xanthine: step 1/1. Functionally, converts the preformed base xanthine, a product of nucleic acid breakdown, to xanthosine 5'-monophosphate (XMP), so it can be reused for RNA or DNA synthesis. This Bacillus cereus (strain ZK / E33L) protein is Xanthine phosphoribosyltransferase.